Consider the following 313-residue polypeptide: Protein YABBY 3 (313 aa).

Residues 65-92 form a C4-type zinc finger; that stretch reads CHYCDTVLVVSVPSSSLFETVTVRCGHC. Disordered regions lie at residues 107–149 and 180–221; these read TTAA…SLLD and NNSP…KRQR. Positions 112–128 are enriched in pro residues; the sequence is APPPPPPPPPPPPPPAA.

Belongs to the YABBY family. In terms of tissue distribution, expressed in shoot apex and young inflorescences.

Its subcellular location is the nucleus. This is Protein YABBY 3 (YAB3) from Oryza sativa subsp. japonica (Rice).